The primary structure comprises 543 residues: Tubby-related protein 1 (543 aa).

The disordered stretch occupies residues Met-1–Gly-290. Composition is skewed to basic and acidic residues over residues Pro-46–Pro-56 and Phe-86–Glu-99. Composition is skewed to acidic residues over residues Gly-110–Glu-132 and Lys-244–Val-255. Over residues Gly-267–Lys-276 the composition is skewed to basic residues.

This sequence belongs to the TUB family. Homodimer. May interact with ABCF1, PSIP1, ZEB1 and HMGB2 (Potential). Interacts with F-actin. Interacts with DNM1. Interacts with TUB. Interacts with TYRO3. Retina specific. Detected in the outer plexiform layer in photoreceptor cells (at protein level).

The protein resides in the cytoplasm. It localises to the cell membrane. It is found in the secreted. The protein localises to the synapse. In terms of biological role, required for normal development of photoreceptor synapses. Required for normal photoreceptor function and for long-term survival of photoreceptor cells. Interacts with cytoskeleton proteins and may play a role in protein transport in photoreceptor cells. Binds lipids, especially phosphatidylinositol 3-phosphate, phosphatidylinositol 4-phosphate, phosphatidylinositol 5-phosphate, phosphatidylinositol 3,4-bisphosphate, phosphatidylinositol 4,5-bisphosphate, phosphatidylinositol 3,4,5-bisphosphate, phosphatidylserine and phosphatidic acid (in vitro). Contribute to stimulation of phagocytosis of apoptotic retinal pigment epithelium (RPE) cells and macrophages. The sequence is that of Tubby-related protein 1 (Tulp1) from Mus musculus (Mouse).